The primary structure comprises 960 residues: Angiomotin-like protein 1 (960 aa).

The tract at residues S196–K248 is disordered. A phosphoserine mark is found at S243, S271, and S297. A coiled-coil region spans residues R261–L281. Disordered regions lie at residues A277–F317, L381–V407, and P413–L432. Over residues Q388–S401 the composition is skewed to low complexity. 2 coiled-coil regions span residues V440–R641 and A667–S697. S722 is subject to Phosphoserine. The stretch at S731–H761 forms a coiled coil. Residues Q775–T826 are disordered. Residues S795, S807, and S830 each carry the phosphoserine modification. Over residues G804–L817 the composition is skewed to polar residues. Residues N842–D952 are disordered. The span at A845–A870 shows a compositional bias: low complexity. Polar residues predominate over residues P898–P911. The residue at position 904 (S904) is a Phosphoserine. T906 bears the Phosphothreonine mark. Position 910 is a phosphoserine (S910). The short motif at E957–I960 is the PDZ-binding element.

This sequence belongs to the angiomotin family. In terms of processing, polyubiquitinated by NEDD4, leading to proteasomal degradation.

Its subcellular location is the cell junction. The protein localises to the tight junction. Its function is as follows. Inhibits the Wnt/beta-catenin signaling pathway, probably by recruiting CTNNB1 to recycling endosomes and hence preventing its translocation to the nucleus. The polypeptide is Angiomotin-like protein 1 (AMOTL1) (Bos taurus (Bovine)).